The primary structure comprises 470 residues: Acetyl-CoA decarbonylase/synthase complex subunit gamma 2 (470 aa).

The 60-residue stretch at M1–D60 folds into the 4Fe-4S domain. Positions 18, 21, 26, and 43 each coordinate [4Fe-4S] cluster.

In terms of assembly, heterodimer of delta and gamma chains. The ACDS complex is made up of alpha, epsilon, beta, gamma and delta chains with a probable stoichiometry of (alpha(2)epsilon(2))(4)-beta(8)-(gamma(1)delta(1))(8). The cofactor is corrinoid. [4Fe-4S] cluster serves as cofactor.

It catalyses the reaction 5,6,7,8-tetrahydrosarcinapterin + methyl-Co(III)-[corrinoid Fe-S protein] = 5-methyltetrahydrosarcinapterin + Co(I)-[corrinoid Fe-S protein] + H(+). The protein operates within one-carbon metabolism; methanogenesis from acetate. Its function is as follows. Part of a complex that catalyzes the reversible cleavage of acetyl-CoA, allowing growth on acetate as sole source of carbon and energy. The sequence is that of Acetyl-CoA decarbonylase/synthase complex subunit gamma 2 from Methanosarcina mazei (strain ATCC BAA-159 / DSM 3647 / Goe1 / Go1 / JCM 11833 / OCM 88) (Methanosarcina frisia).